Reading from the N-terminus, the 119-residue chain is C-C motif chemokine 24 (119 aa).

An N-terminal signal peptide occupies residues 1–26 (MAGLATFVVSLLLVTLCAHCIDPAGS). Disulfide bonds link cysteine 33-cysteine 58 and cysteine 34-cysteine 74. Residues asparagine 54 and asparagine 115 are each glycosylated (N-linked (GlcNAc...) asparagine).

The protein belongs to the intercrine beta (chemokine CC) family.

It localises to the secreted. Its function is as follows. Chemotactic for resting T-lymphocytes, and eosinophils. Has lower chemotactic activity for neutrophils but none for monocytes and activated lymphocytes. Is a strong suppressor of colony formation by a multipotential hematopoietic progenitor cell line. Binds to CCR3. In Canis lupus familiaris (Dog), this protein is C-C motif chemokine 24.